The chain runs to 430 residues: MEWKLEQSMREQALLKAQLTQLKESLKEVQLERDEYAEHLKGERARWQQRMRKMSQEVCSLKKEKKHDKYRVEKLERSLSKLKNQMAEPLPPEPPAVPSEVELQHLRKELERVAGALQAQVEYNQRISLLNEGQKERLREQEERLQEQQERLPEQEERLQQLAEPQNSFKELNNENKSVLQLEQQVKELQEKLGKERLEAASQQKQQLTAQLSLMALPGEGHGGEHLDSEGEEAPRPMPSVPEDLESREAMSGFMDHLEEKADLSELVEKEELGFFQYYRERCHQKVYHPITKPGGSAKDAAPGGGHHQAGPGQGGDEGEAAGAAGDGVAAGGDYKGHSKFLVTAQNPAHEPSPGAPAPQELGAAHKHGDLCEVSLTDSVEPVQGEAREGSPHDNPTAQPIVQDHQEHPGLGSNCCVPFFCWAWLPRRRR.

Residues 2 to 217 (EWKLEQSMRE…LTAQLSLMAL (216 aa)) are a coiled coil. 4 disordered regions span residues 138 to 158 (LREQ…QEER), 217 to 239 (LPGE…RPMP), 290 to 331 (PITK…GVAA), and 382 to 406 (PVQG…QDHQ). Positions 222-235 (HGGEHLDSEGEEAP) are enriched in basic and acidic residues. The segment covering 303 to 316 (PGGGHHQAGPGQGG) has biased composition (gly residues).

It belongs to the GOLGA8 family.

This chain is Putative golgin subfamily A member 8D (GOLGA8DP), found in Homo sapiens (Human).